The chain runs to 1257 residues: LIM domain kinase 1 (1257 aa).

Positions 1 to 24 (MHHQQRLRANGGRGGTGLGAGSGP) are disordered. Residues 1-147 (MHHQQRLRAN…ERSKLYCGQC (147 aa)) form an interaction with LATS1 region. Over residues 11–24 (GGRGGTGLGAGSGP) the composition is skewed to gly residues. 2 LIM zinc-binding domains span residues 31-93 (PLCA…RFGD) and 94-154 (ACQQ…RSCQ). In terms of domain architecture, PDZ spans 174–274 (LVEIPKDATP…MLQLTVEHDP (101 aa)). The Protein kinase domain occupies 401 to 686 (LVIGEKLGEG…PCFETLHVWL (286 aa)). ATP contacts are provided by residues 407-415 (LGEGFFGKV) and K430. D522 is a catalytic residue. 3 disordered regions span residues 552-587 (LPSGNMTPGGYGSGANSDAPMSPSGTLRRSKSRQRR), 759-811 (QDIP…ERAL), and 881-900 (EELLEESTNKPSNQESQHHR). Positions 794–811 (QEERRNLTPDTESKERAL) are enriched in basic and acidic residues. S1000 carries the phosphoserine modification. Disordered regions lie at residues 1010 to 1037 (AKQLATPAPKRSKATATTKGGQSSNPPL), 1085 to 1182 (SAQQ…EKVH), and 1212 to 1257 (AAGT…NTRC). Polar residues-rich tracts occupy residues 1085 to 1095 (SAQQQRTSSNH) and 1113 to 1125 (RTGSQGIPASNCV). Low complexity-rich tracts occupy residues 1126 to 1137 (SPTRSSRPGSPT) and 1145 to 1166 (TAATAQRLTNAAATHQQQHQQQ).

This sequence belongs to the protein kinase superfamily. TKL Ser/Thr protein kinase family. As to quaternary structure, interacts with LATS1, and this interaction inhibits phosphorylation of tsr/cofilin. In terms of processing, phosphorylated on serine and/or threonine residues by ROCK1. Phosphorylated by PAK4 resulting in increased LIMK1 ability to phosphorylate cofilin. May be dephosphorylated and inactivated by SSH1. As to expression, expressed throughout the imaginal disks of the eye, leg and wing.

It is found in the cytoplasm. The protein localises to the cleavage furrow. It localises to the midbody. The enzyme catalyses L-seryl-[protein] + ATP = O-phospho-L-seryl-[protein] + ADP + H(+). It carries out the reaction L-threonyl-[protein] + ATP = O-phospho-L-threonyl-[protein] + ADP + H(+). Functionally, protein kinase which regulates actin filament dynamics. Phosphorylates and inactivates the actin binding/depolymerizing factor tsr/cofilin, thereby stabilizing the actin cytoskeleton. Modulation of actin cytoskeleton dynamics may be essential for imaginal disk morphogenesis and axon guidance. This Drosophila melanogaster (Fruit fly) protein is LIM domain kinase 1 (LIMK1).